The chain runs to 154 residues: Prefoldin subunit alpha (154 aa).

Polar residues predominate over residues 92–102 (DNAVESLSTKQ). Residues 92–154 (DNAVESLSTK…MQDQQPEDNE (63 aa)) are disordered. The segment covering 103–114 (DALDNRIESLRD) has biased composition (basic and acidic residues). A compositionally biased stretch (low complexity) spans 128 to 148 (QQAQQMQQQMQQQQMQQMQDQ).

Belongs to the prefoldin subunit alpha family. In terms of assembly, heterohexamer of two alpha and four beta subunits.

It localises to the cytoplasm. In terms of biological role, molecular chaperone capable of stabilizing a range of proteins. Seems to fulfill an ATP-independent, HSP70-like function in archaeal de novo protein folding. The chain is Prefoldin subunit alpha from Haloquadratum walsbyi (strain DSM 16790 / HBSQ001).